Here is a 129-residue protein sequence, read N- to C-terminus: Small ribosomal subunit protein uS11 (129 aa).

The protein belongs to the universal ribosomal protein uS11 family. Part of the 30S ribosomal subunit. Interacts with proteins S7 and S18. Binds to IF-3.

In terms of biological role, located on the platform of the 30S subunit, it bridges several disparate RNA helices of the 16S rRNA. Forms part of the Shine-Dalgarno cleft in the 70S ribosome. In Dechloromonas aromatica (strain RCB), this protein is Small ribosomal subunit protein uS11.